The primary structure comprises 391 residues: Inhibin beta B chain (391 aa).

The N-terminal stretch at 1 to 25 (MDGAARRGVLAALLACGLLLLGAAA) is a signal peptide. Residues 26 to 276 (TPTPPPAGSS…ADNKHRIRKR (251 aa)) constitute a propeptide that is removed on maturation. The segment at 27–47 (PTPPPAGSSPQDTCTSCGFRR) is disordered. Residue N77 is glycosylated (N-linked (GlcNAc...) asparagine). Cystine bridges form between C280–C288, C287–C356, C316–C388, and C320–C390.

It belongs to the TGF-beta family. In terms of assembly, dimeric, linked by one or more disulfide bonds. Inhibin A is a dimer of alpha and beta-A. Inhibin B is a dimer of alpha and beta-B. Activin A is a homodimer of beta-A. Activin B is a homodimer of beta-B. Activin AB is a dimer of beta-A and beta-B.

It localises to the secreted. Functionally, inhibins and activins inhibit and activate, respectively, the secretion of follitropin by the pituitary gland. Inhibins/activins are involved in regulating a number of diverse functions such as hypothalamic and pituitary hormone secretion, gonadal hormone secretion, germ cell development and maturation, erythroid differentiation, insulin secretion, nerve cell survival, embryonic axial development or bone growth, depending on their subunit composition. Inhibins appear to oppose the functions of activins. In Gallus gallus (Chicken), this protein is Inhibin beta B chain (INHBB).